The sequence spans 502 residues: ATP synthase subunit alpha (502 aa).

The disordered stretch occupies residues 115–135; sequence VDGLGPINTTNTRPIESPAPG. 169–176 provides a ligand contact to ATP; sequence GDRQTGKT.

Belongs to the ATPase alpha/beta chains family. F-type ATPases have 2 components, CF(1) - the catalytic core - and CF(0) - the membrane proton channel. CF(1) has five subunits: alpha(3), beta(3), gamma(1), delta(1), epsilon(1). CF(0) has three main subunits: a(1), b(2) and c(9-12). The alpha and beta chains form an alternating ring which encloses part of the gamma chain. CF(1) is attached to CF(0) by a central stalk formed by the gamma and epsilon chains, while a peripheral stalk is formed by the delta and b chains.

The protein resides in the cell membrane. It catalyses the reaction ATP + H2O + 4 H(+)(in) = ADP + phosphate + 5 H(+)(out). Its function is as follows. Produces ATP from ADP in the presence of a proton gradient across the membrane. The alpha chain is a regulatory subunit. This is ATP synthase subunit alpha from Bacillus anthracis (strain A0248).